Here is a 176-residue protein sequence, read N- to C-terminus: Large ribosomal subunit protein uL16 (176 aa).

Belongs to the universal ribosomal protein uL16 family.

This Halorubrum lacusprofundi (strain ATCC 49239 / DSM 5036 / JCM 8891 / ACAM 34) protein is Large ribosomal subunit protein uL16.